The chain runs to 162 residues: Shikimate kinase (162 aa).

11-16 is a binding site for ATP; that stretch reads GSGKSS. A Mg(2+)-binding site is contributed by Ser-15. The substrate site is built by Asp-33, Arg-57, and Gly-80. Arg-116 is an ATP binding site. A substrate-binding site is contributed by Arg-132.

Belongs to the shikimate kinase family. Monomer. The cofactor is Mg(2+).

It localises to the cytoplasm. The catalysed reaction is shikimate + ATP = 3-phosphoshikimate + ADP + H(+). The protein operates within metabolic intermediate biosynthesis; chorismate biosynthesis; chorismate from D-erythrose 4-phosphate and phosphoenolpyruvate: step 5/7. Catalyzes the specific phosphorylation of the 3-hydroxyl group of shikimic acid using ATP as a cosubstrate. This is Shikimate kinase from Helicobacter pylori (strain J99 / ATCC 700824) (Campylobacter pylori J99).